Here is a 322-residue protein sequence, read N- to C-terminus: uncharacterized protein (322 aa).

8 helical membrane-spanning segments follow: residues 7-27 (IQKIAPAAIGACLFVLSIGAI), 54-74 (AFALMLINYIILTGYDTLAMF), 87-107 (FVGFVSYAISNSVGLALLSGS), 128-148 (IAFCNLSFWVGLLTVGGITFV), 162-182 (FLSVHPIGFTFLAIIGIYLLI), 209-229 (IGLTAVDWILASGILYVLLPG), 249-269 (GIISNVPGGLGVFETVVLFLL), and 287-307 (VIYYWIPLGSASLSLGAFELL).

To E.coli YbhN.

The protein localises to the cell membrane. This is an uncharacterized protein from Synechocystis sp. (strain ATCC 27184 / PCC 6803 / Kazusa).